The following is an 89-amino-acid chain: Small ribosomal subunit protein uS15 (89 aa).

The span at 1–21 (MALSPEKKNEIIENFKTHEGD) shows a compositional bias: basic and acidic residues. The disordered stretch occupies residues 1–23 (MALSPEKKNEIIENFKTHEGDTG).

The protein belongs to the universal ribosomal protein uS15 family. As to quaternary structure, part of the 30S ribosomal subunit. Forms a bridge to the 50S subunit in the 70S ribosome, contacting the 23S rRNA.

One of the primary rRNA binding proteins, it binds directly to 16S rRNA where it helps nucleate assembly of the platform of the 30S subunit by binding and bridging several RNA helices of the 16S rRNA. Functionally, forms an intersubunit bridge (bridge B4) with the 23S rRNA of the 50S subunit in the ribosome. In Desulforamulus reducens (strain ATCC BAA-1160 / DSM 100696 / MI-1) (Desulfotomaculum reducens), this protein is Small ribosomal subunit protein uS15.